We begin with the raw amino-acid sequence, 340 residues long: Tryptophan--tRNA ligase (340 aa).

Residues 11–13 (RPT) and 19–20 (GH) contribute to the ATP site. The short motif at 12 to 20 (PTGKLHLGH) is the 'HIGH' region element. L-tryptophan is bound at residue Asp-140. Residues 152-154 (GND), Leu-194, and 202-206 (KMSKS) each bind ATP. The short motif at 202–206 (KMSKS) is the 'KMSKS' region element.

The protein belongs to the class-I aminoacyl-tRNA synthetase family. In terms of assembly, homodimer.

The protein localises to the cytoplasm. It carries out the reaction tRNA(Trp) + L-tryptophan + ATP = L-tryptophyl-tRNA(Trp) + AMP + diphosphate + H(+). Its function is as follows. Catalyzes the attachment of tryptophan to tRNA(Trp). The protein is Tryptophan--tRNA ligase of Streptococcus pyogenes serotype M3 (strain ATCC BAA-595 / MGAS315).